The chain runs to 445 residues: MDIKFYTEKLAREARESQKFLRRVTTDIKNRVLLRTAELLIEKKEIIKEANDKDLEFAQKKGYSKALLDRLTLNEKRINGMVQVLKDVASLPDPVGEIISMWTRPNGLRVGQMRVPLGTVMIIYEARPNVTVEAASLCIKSSNAVILKGGSETINSNRVLVEILRQAARESGFPERAIQFVDTTDREAVNHLLTLDQYIDVVIPRGGEGLIRAVAEKATMPVIKHYKGVCNLYIDDEADMEKALNIAYNAKVERPSVCNAIENLIVHKDIAEKFLPEIAYYYGKAGVEMRCDERALEILRDHPKANDTEIVPAKEDDYYEEFLDLIIAVKVVDSIDQAIDFIHKYGSNHSESIVTENYTKGMRFINEVDSSAVYINASTRFTDGNEFGLGAEMGISTDKIHVRGPMGLKELTIPKFIIFGDGQIRNNVGIPEDEEIKIDTEKCEM.

It belongs to the gamma-glutamyl phosphate reductase family.

The protein resides in the cytoplasm. It catalyses the reaction L-glutamate 5-semialdehyde + phosphate + NADP(+) = L-glutamyl 5-phosphate + NADPH + H(+). It participates in amino-acid biosynthesis; L-proline biosynthesis; L-glutamate 5-semialdehyde from L-glutamate: step 2/2. In terms of biological role, catalyzes the NADPH-dependent reduction of L-glutamate 5-phosphate into L-glutamate 5-semialdehyde and phosphate. The product spontaneously undergoes cyclization to form 1-pyrroline-5-carboxylate. The protein is Gamma-glutamyl phosphate reductase of Persephonella marina (strain DSM 14350 / EX-H1).